The following is a 1057-amino-acid chain: MDWHSFRIAALLLTSLVVLEVNSEFQIQVRDHNAKNGTIKWHSIRRQKREWIKFAAACREGEDNSKRNPIAKIHSDCAANQPVTYRISGVGIDQPPYGIFIINQKTGEINITSIVDREVTPFFIIYCRALNAQGQDLENPLELRVRVMDINDNPPVFSMTTFLGQIEENSNANTLVMKLNATDADEPNNLNSMIAFKIIRQEPSDSPMFIINRKTGEIRTMNNFLDREQYSQYSLVVRGSDRDGGADGMSAESECSITILDVNDNIPYLEQSSYDITIEENALHSQLVQIRVIDLDEEFSDNWKAIIFFISGNEGNWFEIEMNERTNVGTLKVVKPLDYEAMKNLQLSIGVRNVAEFHQSIISQYRLTATMVTVTVLNVIEGSVFRPGSKTFVVDSRMEANHRVGEFVATDLDTGRASTNVRYEMGNNPENLLVVDSRTGIITLRNRVTMEQYQRLNGEYKGTVLSIDDSLQRTCTGTIVIELSGTGWVTGSESGGSSSGSGDDRDRVTNGYQGTSSTENPQRVTGSWGGSGIDGTRPNTNPFQGDPDETLETPLYGDNVHFGPAGIGLLIMGFLVLGLVPFLLICCDCGGAPGGGAGFEPVPECSDGAIHTWAVEGPQPEPHEGITTICVPQMPPGNANVIEYIDNSGVYTNEYCGREMQDLGGGERTTGFELMDGVKTSAAPEICQEYSGTLRRNSMRECRDGGLNMNFMESYFCQKAYAYADEDEGRPSNDCLLIYDIEGVGSPAGSVGCCSFIGEDLDESFLDTLGPKFKKLADISLGKEIDSYPDSDPSWPPQSTEPMCPQHTEPLGSGHPPISPHFGTTTVISENAYHSGPGVQHPVPIPDPLGYGNVTVRESYTTSGTLKPSVHFHDNQQASNVVVTERVVGPISGADLHGMLEIPDLRGGANVIVTERVIAPGSSLPTSLTIPNPQETSNVVVTERVIQPTSGMIGNLSMTPELSSAHNVIVTERVVSGAGMSEIAGTAGLGGVGGIGSSGLVSTTMGASGTGLNMGGTATIGHMRSSSDHHFSQTVGSASPSMARSRITKYNTVQYSK.

A signal peptide spans Met1–Ser23. A propeptide spanning residues Glu24–Arg49 is cleaved from the precursor. 4 Cadherin domains span residues Glu50–Phe157, Ser158–Leu269, Glu270–Ser389, and Arg386–Glu493. At Glu50–Pro564 the chain is on the extracellular side. Residues Asn110 and Asn180 are each glycosylated (N-linked (GlcNAc...) asparagine). The disordered stretch occupies residues Thr490–Glu552. A compositionally biased stretch (polar residues) spans Asn510 to Thr525. A helical membrane pass occupies residues Ala565–Ile585. Topologically, residues Cys586–Lys1057 are cytoplasmic. Desmoglein repeat repeat units lie at residues Ala832–Glu858, Ser859–Val888, Gly889–Ile918, Ala919–Ile946, and Gln947–Val975.

As to quaternary structure, binds to JUP/plakoglobin. Interacts with PKP2. Interacts with DSC3; there is evidence to suggest that the interaction promotes cell-cell adhesion of keratinocytes. In terms of tissue distribution, expressed in testis.

The protein resides in the cell membrane. The protein localises to the cell junction. Its subcellular location is the desmosome. It is found in the cytoplasm. It localises to the nucleus. Its function is as follows. Component of intercellular desmosome junctions. Involved in the interaction of plaque proteins and intermediate filaments mediating cell-cell adhesion. This is Desmoglein-1-alpha (Dsg1a) from Mus musculus (Mouse).